A 156-amino-acid polypeptide reads, in one-letter code: Small ribosomal subunit protein uS7 (156 aa).

The protein belongs to the universal ribosomal protein uS7 family. Part of the 30S ribosomal subunit. Contacts proteins S9 and S11.

One of the primary rRNA binding proteins, it binds directly to 16S rRNA where it nucleates assembly of the head domain of the 30S subunit. Is located at the subunit interface close to the decoding center, probably blocks exit of the E-site tRNA. This chain is Small ribosomal subunit protein uS7, found in Sodalis glossinidius (strain morsitans).